Reading from the N-terminus, the 693-residue chain is CREB-regulated transcription coactivator 2 (693 aa).

Over residues 1 to 20 (MATSGANGPGSATASASNPR) the composition is skewed to polar residues. Positions 1 to 30 (MATSGANGPGSATASASNPRKFSEKIALQK) are disordered. A2 carries the N-acetylalanine modification. R51 is subject to Asymmetric dimethylarginine; by PRMT6. Phosphoserine occurs at positions 70, 86, and 90. R99, R120, and R123 each carry asymmetric dimethylarginine; by PRMT6. A Phosphoserine modification is found at S136. 2 positions are modified to asymmetric dimethylarginine; by PRMT6: R161 and R168. A Phosphothreonine modification is found at T169. S171 is subject to Phosphoserine. The span at 174 to 188 (ALHTSVMNPSPQDTY) shows a compositional bias: polar residues. Positions 174–210 (ALHTSVMNPSPQDTYPSPAAPSVLPSRRGGCLDGETD) are disordered. The required for interaction with COP1 stretch occupies residues 209–215 (TDSKVPA). K234 is covalently cross-linked (Glycyl lysine isopeptide (Lys-Gly) (interchain with G-Cter in SUMO2)). The Nuclear export signal signature appears at 271–287 (TGGSLPDLTNLHFPPPL). 3 disordered regions span residues 271 to 307 (TGGS…GSST), 335 to 463 (HSPL…SPTL), and 476 to 548 (KLPT…QSYH). S274 is modified (phosphoserine; by MARK2). S306 carries the phosphoserine modification. Polar residues predominate over residues 339 to 351 (SHPSFQSSLSNPN). 2 stretches are compositionally biased toward low complexity: residues 352–378 (LQAS…SSLA) and 386–424 (SLGH…PGAS). Phosphoserine is present on residues S368, S393, S433, and S456. Residues 447-463 (SQQQLPKQFSPTMSPTL) show a composition bias toward polar residues. Y488 carries the post-translational modification Phosphotyrosine. Phosphoserine occurs at positions 489 and 492. T501 carries the post-translational modification Phosphothreonine. Residues S613 and S624 each carry the phosphoserine modification.

It belongs to the TORC family. As to quaternary structure, binds, as a tetramer, through its N-terminal region, with the bZIP domain of CREB1. 'Arg-314' in the bZIP domain of CREB1 is essential for this interaction. Interaction, via its C-terminal, with TAF4, enhances recruitment of TAF4 to CREB1. Interacts with SIK2. Interacts with 14-3-3 proteins, YWHAB and YWHAG. Interacts (probably when phosphorylated at Ser-171) with YWHAE. Interacts with calmodulin-dependent catalytic subunit PPP3CA/calcineurin A. Interaction with COP1 mediates nuclear export and degradation of CRTC2. Phosphorylation/dephosphorylation states of Ser-171 are required for regulating transduction of CREB activity. CRTCs/TORCs are inactive when phosphorylated, and active when dephosphorylated at this site. This primary site of phosphorylation, is regulated by cAMP and calcium levels and is dependent on the phosphorylation of SIKs (SIK1 and SIK2) by LKB1. Following adenylyl cyclase activation, dephosphorylated at Ser-171 by PPP3CA/calcineurin A resulting in CRTC2 dissociation from 14-3-3 proteins and PPP3CA. Both insulin and AMPK increase this phosphorylation of CRTC2 while glucagon suppresses it. Phosphorylation at Ser-274 by MARK2 is induced under low glucose conditions and dephosphorylated in response to glucose influx. Phosphorylation at Ser-274 promotes interaction with 14-3-3 proteins and translocation to the cytoplasm. Post-translationally, asymmetric dimethylation of arginine resisues by PRMT6 enhances the association of CRTC2 with CREB on the promoters of gluconeogenic genes.

It localises to the cytoplasm. The protein resides in the nucleus. Its function is as follows. Transcriptional coactivator for CREB1 which activates transcription through both consensus and variant cAMP response element (CRE) sites. Acts as a coactivator, in the SIK/TORC signaling pathway, being active when dephosphorylated and acts independently of CREB1 'Ser-133' phosphorylation. Enhances the interaction of CREB1 with TAF4. Regulates gluconeogenesis as a component of the LKB1/AMPK/TORC2 signaling pathway. Regulates the expression of specific genes such as the steroidogenic gene, StAR. Potent coactivator of PPARGC1A and inducer of mitochondrial biogenesis in muscle cells. This Bos taurus (Bovine) protein is CREB-regulated transcription coactivator 2 (CRTC2).